Here is a 355-residue protein sequence, read N- to C-terminus: Protein RecA (355 aa).

73–80 serves as a coordination point for ATP; it reads GPESSGKT.

Belongs to the RecA family.

It localises to the cytoplasm. Can catalyze the hydrolysis of ATP in the presence of single-stranded DNA, the ATP-dependent uptake of single-stranded DNA by duplex DNA, and the ATP-dependent hybridization of homologous single-stranded DNAs. It interacts with LexA causing its activation and leading to its autocatalytic cleavage. The sequence is that of Protein RecA from Solidesulfovibrio magneticus (strain ATCC 700980 / DSM 13731 / RS-1) (Desulfovibrio magneticus).